Reading from the N-terminus, the 174-residue chain is UPF0340 protein MW2038 (174 aa).

The protein belongs to the UPF0340 family.

The sequence is that of UPF0340 protein MW2038 from Staphylococcus aureus (strain MW2).